The chain runs to 64 residues: Alpha-conotoxin-like Ac1.1b (64 aa).

Positions 1-21 are cleaved as a signal peptide; sequence MGMRMMFTLFLLVVLTTTVVS. The propeptide occupies 22–47; the sequence is FPSDSASDGRDDEAKDERSDMYKSKR. Residues 23-46 form a disordered region; sequence PSDSASDGRDDEAKDERSDMYKSK. Residues 28-44 show a composition bias toward basic and acidic residues; it reads SDGRDDEAKDERSDMYK. 2 cysteine pairs are disulfide-bonded: C51/C56 and C52/C62. The residue at position 62 (C62) is a Cysteine amide.

The protein belongs to the conotoxin A superfamily. As to expression, expressed by the venom duct.

It localises to the secreted. Alpha-conotoxins act on postsynaptic membranes, they bind to the nicotinic acetylcholine receptors (nAChR) and thus inhibit them. This is Alpha-conotoxin-like Ac1.1b from Conus achatinus (Little frog cone).